The following is a 413-amino-acid chain: Serine hydroxymethyltransferase (413 aa).

(6S)-5,6,7,8-tetrahydrofolate is bound by residues Leu120 and 124–126; that span reads GHL. Lys229 is subject to N6-(pyridoxal phosphate)lysine. 352 to 354 provides a ligand contact to (6S)-5,6,7,8-tetrahydrofolate; that stretch reads SPF.

The protein belongs to the SHMT family. In terms of assembly, homodimer. Pyridoxal 5'-phosphate serves as cofactor.

The protein resides in the cytoplasm. It catalyses the reaction (6R)-5,10-methylene-5,6,7,8-tetrahydrofolate + glycine + H2O = (6S)-5,6,7,8-tetrahydrofolate + L-serine. It functions in the pathway one-carbon metabolism; tetrahydrofolate interconversion. The protein operates within amino-acid biosynthesis; glycine biosynthesis; glycine from L-serine: step 1/1. In terms of biological role, catalyzes the reversible interconversion of serine and glycine with tetrahydrofolate (THF) serving as the one-carbon carrier. This reaction serves as the major source of one-carbon groups required for the biosynthesis of purines, thymidylate, methionine, and other important biomolecules. Also exhibits THF-independent aldolase activity toward beta-hydroxyamino acids, producing glycine and aldehydes, via a retro-aldol mechanism. The sequence is that of Serine hydroxymethyltransferase from Heliobacterium modesticaldum (strain ATCC 51547 / Ice1).